The following is a 164-amino-acid chain: Transcription factor E (164 aa).

Residues 5 to 87 (NDKVIRGYLL…LWRLDFSDIE (83 aa)) enclose the HTH TFE/IIEalpha-type domain.

It belongs to the TFE family. In terms of assembly, monomer. Interaction with RNA polymerase subunits RpoF and RpoE is necessary for Tfe stimulatory transcription activity. Able to interact with Tbp and RNA polymerase in the absence of DNA promoter. Interacts both with the preinitiation and elongation complexes.

Its function is as follows. Transcription factor that plays a role in the activation of archaeal genes transcribed by RNA polymerase. Facilitates transcription initiation by enhancing TATA-box recognition by TATA-box-binding protein (Tbp), and transcription factor B (Tfb) and RNA polymerase recruitment. Not absolutely required for transcription in vitro, but particularly important in cases where Tbp or Tfb function is not optimal. It dynamically alters the nucleic acid-binding properties of RNA polymerases by stabilizing the initiation complex and destabilizing elongation complexes. Seems to translocate with the RNA polymerase following initiation and acts by binding to the non template strand of the transcription bubble in elongation complexes. In Methanosarcina barkeri (strain Fusaro / DSM 804), this protein is Transcription factor E.